A 310-amino-acid polypeptide reads, in one-letter code: Malate dehydrogenase (310 aa).

NAD(+)-binding positions include 7-12 and Asp32; that span reads GAGNVG. Substrate-binding residues include Arg81 and Arg87. NAD(+) is bound by residues Asn94 and 117–119; that span reads VSN. The substrate site is built by Asn119 and Arg150. Residue His174 is the Proton acceptor of the active site.

Belongs to the LDH/MDH superfamily. MDH type 3 family. Homotetramer; arranged as a dimer of dimers.

The catalysed reaction is (S)-malate + NAD(+) = oxaloacetate + NADH + H(+). Catalyzes the reversible oxidation of malate to oxaloacetate. The chain is Malate dehydrogenase from Chlorobaculum tepidum (strain ATCC 49652 / DSM 12025 / NBRC 103806 / TLS) (Chlorobium tepidum).